The primary structure comprises 35 residues: Cupiennin-1a (35 aa).

Glutamic acid 1-amide is present on E35.

It belongs to the cationic peptide 04 (cupiennin) family. 01 subfamily. Monomer. Interacts with CSTX-1 (AC P81694), CSTX-9 (AC P58604), and CSTX-13 (AC P83919). As to expression, expressed by the venom gland.

It is found in the secreted. Functionally, has antimicrobial activity against B.subtilis, E.coli, E.faecalis, P.denitrificans, P.aeruginosa, P.putida, S.aureus, and S.epidermidis. Shows insecticidal and hemolytic activities. Probably acts by disturbing membrane function with its amphipathic structure. Synergistically increases the insecticidal activity of CSTX-1 (AC P81694), CSTX-9 (AC P58604), and CSTX-13 (AC P83919) by up to 65%. Also inhibits the formation of nitric oxide by neuronal nitric oxide synthase. This Cupiennius salei (American wandering spider) protein is Cupiennin-1a.